Reading from the N-terminus, the 22-residue chain is Antimicrobial peptide 4 (22 aa).

As to expression, expressed by the skin glands.

The protein resides in the secreted. Functionally, has very strong antimicrobial activity against Gram-positive bacterium S.aureus and yeast C.albicans, and very weak activity against Gram-negative bacterium E.coli. Has strong hemolytic activity against human red blood cells. The protein is Antimicrobial peptide 4 of Xenopus tropicalis (Western clawed frog).